The primary structure comprises 125 residues: MADLSNLVEQLSSLTVLEAAELSKLLEEKWGVSAAAPVAVAAAPAAGAAAAPAEEQTEFTVILAKAGDKKINVIKEIRTITGLGLKEAKDLVEGAPKTVKEGVNKDEAEKIKKVLEEQGAAVEIK.

This sequence belongs to the bacterial ribosomal protein bL12 family. In terms of assembly, homodimer. Part of the ribosomal stalk of the 50S ribosomal subunit. Forms a multimeric L10(L12)X complex, where L10 forms an elongated spine to which 2 to 4 L12 dimers bind in a sequential fashion. Binds GTP-bound translation factors.

Functionally, forms part of the ribosomal stalk which helps the ribosome interact with GTP-bound translation factors. Is thus essential for accurate translation. This is Large ribosomal subunit protein bL12 from Granulibacter bethesdensis (strain ATCC BAA-1260 / CGDNIH1).